The sequence spans 209 residues: Translation initiation factor IF-3 (209 aa).

The protein belongs to the IF-3 family. Monomer.

It is found in the cytoplasm. Functionally, IF-3 binds to the 30S ribosomal subunit and shifts the equilibrium between 70S ribosomes and their 50S and 30S subunits in favor of the free subunits, thus enhancing the availability of 30S subunits on which protein synthesis initiation begins. The protein is Translation initiation factor IF-3 of Chlorobium phaeobacteroides (strain DSM 266 / SMG 266 / 2430).